The following is a 400-amino-acid chain: Large envelope protein (400 aa).

Met1 is modified (N-acetylmethionine). Gly2 carries N-myristoyl glycine; by host lipidation. A pre-S1 region spans residues 2-119; sequence GAPLSTARRG…PPLRDTHPQA (118 aa). Positions 2–174 are pre-S; sequence GAPLSTARRG…FSKTGDPAMN (173 aa). The Virion surface; in external conformation segment spans residues 2 to 181; it reads GAPLSTARRG…AMNMENITSG (180 aa). At 2–253 the chain is on the intravirion; in internal conformation side; sequence GAPLSTARRG…PGYRWMCLRR (252 aa). A glycan (N-linked (GlcNAc...) asparagine) is linked at Pro4. Residues 70 to 115 form a disordered region; it reads PHGGLLGWSPQAQGILTTSPPDPPPASTNRRSGRKPTPVSPPLRDT. Over residues 79–88 the composition is skewed to polar residues; that stretch reads PQAQGILTTS. The pre-S2 stretch occupies residues 120-174; it reads MQWNSTQFHQALLDPRVRGLYLPAGGSSSETQNPVPTIASLTSSIFSKTGDPAMN. The chain crosses the membrane as a helical span at residues 182–202; it reads LLGPLLVLQAVCFLLTKILTI. The Intravirion; in external conformation segment spans residues 203 to 253; that stretch reads PQSLDSWWTSLNFLGVPPGCPGQNSQSPISNHLPTSCPPTCPGYRWMCLRR. A helical membrane pass occupies residues 254-274; that stretch reads FIIFLFILLLCLIFLLVLLDY. At 275–348 the chain is on the virion surface side; the sequence is QGMLPVCPLL…WASARFSWLS (74 aa). Asn320 is a glycosylation site (N-linked (GlcNAc...) asparagine; by host). A helical transmembrane segment spans residues 349 to 369; it reads LLVQFVQWCVGLSPTVWLLVI. Residues 370 to 375 lie on the Intravirion side of the membrane; the sequence is WMIWYW. Residues 376 to 398 form a helical membrane-spanning segment; it reads GPNLCSILSPFIPLLPIFCYLWA. Topologically, residues 399-400 are virion surface; the sequence is SI.

Belongs to the orthohepadnavirus major surface antigen family. In its internal form (Li-HBsAg), interacts with the capsid protein and with the isoform S. Interacts with host chaperone CANX. In terms of assembly, associates with host chaperone CANX through its pre-S2 N glycan; this association may be essential for isoform M proper secretion. As to quaternary structure, interacts with isoform L. Interacts with the antigens of satellite virus HDV (HDVAgs); this interaction is required for encapsidation of HDV genomic RNA. In terms of processing, isoform M is N-terminally acetylated by host at a ratio of 90%, and N-glycosylated by host at the pre-S2 region. Post-translationally, myristoylated.

Its subcellular location is the virion membrane. Its function is as follows. The large envelope protein exists in two topological conformations, one which is termed 'external' or Le-HBsAg and the other 'internal' or Li-HBsAg. In its external conformation the protein attaches the virus to cell receptors and thereby initiating infection. This interaction determines the species specificity and liver tropism. This attachment induces virion internalization predominantly through caveolin-mediated endocytosis. The large envelope protein also assures fusion between virion membrane and endosomal membrane. In its internal conformation the protein plays a role in virion morphogenesis and mediates the contact with the nucleocapsid like a matrix protein. The middle envelope protein plays an important role in the budding of the virion. It is involved in the induction of budding in a nucleocapsid independent way. In this process the majority of envelope proteins bud to form subviral lipoprotein particles of 22 nm of diameter that do not contain a nucleocapsid. This chain is Large envelope protein, found in Hepatitis B virus genotype H subtype adw4 (isolate Nicaragua/2928Nic/1997) (HBV-H).